Consider the following 301-residue polypeptide: tRNA-cytidine(32) 2-sulfurtransferase (301 aa).

Positions 47–52 (SGGKDS) match the PP-loop motif motif. Residues C122, C125, and C213 each coordinate [4Fe-4S] cluster.

Belongs to the TtcA family. As to quaternary structure, homodimer. Mg(2+) is required as a cofactor. The cofactor is [4Fe-4S] cluster.

It localises to the cytoplasm. It carries out the reaction cytidine(32) in tRNA + S-sulfanyl-L-cysteinyl-[cysteine desulfurase] + AH2 + ATP = 2-thiocytidine(32) in tRNA + L-cysteinyl-[cysteine desulfurase] + A + AMP + diphosphate + H(+). It functions in the pathway tRNA modification. Catalyzes the ATP-dependent 2-thiolation of cytidine in position 32 of tRNA, to form 2-thiocytidine (s(2)C32). The sulfur atoms are provided by the cysteine/cysteine desulfurase (IscS) system. The chain is tRNA-cytidine(32) 2-sulfurtransferase from Photobacterium profundum (strain SS9).